Here is a 320-residue protein sequence, read N- to C-terminus: PUP1 protein homolog (320 aa).

The next 2 helical transmembrane spans lie at 66-85 and 100-119; these read MWGG…AYRY and FVLG…RSMY. Positions 205–320 are disordered; it reads GGVFNGSPFM…QSGRYGGNRS (116 aa). Phosphoserine is present on serine 230. The segment covering 253–266 has biased composition (polar residues); the sequence is GDNSSSSSWENIRN. Basic and acidic residues predominate over residues 267-284; the sequence is TSRDQSQESDASVDHESD.

The protein belongs to the PUP1 family.

Its subcellular location is the mitochondrion membrane. The protein is PUP1 protein homolog of Saccharomyces cerevisiae (strain ATCC 204508 / S288c) (Baker's yeast).